A 211-amino-acid polypeptide reads, in one-letter code: Small ribosomal subunit protein uS3 (211 aa).

The KH type-2 domain occupies 38–106 (LRNFLKKRLY…EIYLNIQEVR (69 aa)).

It belongs to the universal ribosomal protein uS3 family. As to quaternary structure, part of the 30S ribosomal subunit. Forms a tight complex with proteins S10 and S14.

Functionally, binds the lower part of the 30S subunit head. Binds mRNA in the 70S ribosome, positioning it for translation. The protein is Small ribosomal subunit protein uS3 of Geobacter sulfurreducens (strain ATCC 51573 / DSM 12127 / PCA).